The following is a 286-amino-acid chain: ATP synthase gamma chain (286 aa).

The protein belongs to the ATPase gamma chain family. In terms of assembly, F-type ATPases have 2 components, CF(1) - the catalytic core - and CF(0) - the membrane proton channel. CF(1) has five subunits: alpha(3), beta(3), gamma(1), delta(1), epsilon(1). CF(0) has three main subunits: a, b and c.

It is found in the cell inner membrane. Functionally, produces ATP from ADP in the presence of a proton gradient across the membrane. The gamma chain is believed to be important in regulating ATPase activity and the flow of protons through the CF(0) complex. The polypeptide is ATP synthase gamma chain (Shewanella halifaxensis (strain HAW-EB4)).